Here is a 219-residue protein sequence, read N- to C-terminus: Adenylate kinase (219 aa).

Position 10–15 (10–15 (GAGKGT)) interacts with ATP. The interval 30–59 (STGDMLRAAIREGTELGLKAKSVMESGGLV) is NMP. AMP-binding positions include threonine 31, arginine 36, 57–59 (GLV), 85–88 (GFPR), and glutamine 92. An LID region spans residues 122–159 (GRRQHPASGRVYHIEYNPPKVEGKDDVTGEELVQRPDD). ATP-binding positions include arginine 123 and 132–133 (VY). The AMP site is built by arginine 156 and arginine 167. Arginine 202 provides a ligand contact to ATP.

Belongs to the adenylate kinase family. In terms of assembly, monomer.

It is found in the cytoplasm. The enzyme catalyses AMP + ATP = 2 ADP. It participates in purine metabolism; AMP biosynthesis via salvage pathway; AMP from ADP: step 1/1. Catalyzes the reversible transfer of the terminal phosphate group between ATP and AMP. Plays an important role in cellular energy homeostasis and in adenine nucleotide metabolism. This Acinetobacter baylyi (strain ATCC 33305 / BD413 / ADP1) protein is Adenylate kinase.